Consider the following 197-residue polypeptide: MANYPQLNKEVQQGEIKVVMHTNKGDMTFKLFPNIAPKTVENFVTHAKNGYYDGITFHRVINDFMIQGGDPTATGMGGESIYGGAFEDEFSLNAFNLYGALSMANSGPNTNGSQFFIVQMKEVPQNMLSQLADGGWPQPIVDAYGEKGGTPWLDQKHTVFGQIIDGETTLEDIANTKVGPQDKPLHDVVIESIDVEE.

One can recognise a PPIase cyclophilin-type domain in the interval G14–V195.

It belongs to the cyclophilin-type PPIase family.

The catalysed reaction is [protein]-peptidylproline (omega=180) = [protein]-peptidylproline (omega=0). In terms of biological role, PPIases accelerate the folding of proteins. It catalyzes the cis-trans isomerization of proline imidic peptide bonds in oligopeptides. This Staphylococcus aureus (strain bovine RF122 / ET3-1) protein is Putative peptidyl-prolyl cis-trans isomerase.